The primary structure comprises 84 residues: Delta-conotoxin-like MVIA (84 aa).

Residues 1–22 form the signal peptide; sequence MKLTCVMIVAVLFLTTWTFVTA. The propeptide occupies 23–49; sequence DDSRYGLKNLFPKARHEMKNPEASKLN. 3 disulfide bridges follow: cysteine 54/cysteine 69, cysteine 61/cysteine 73, and cysteine 68/cysteine 77. Proline 65 bears the 4-hydroxyproline mark. The residue at position 83 (serine 83) is a Serine amide.

It belongs to the conotoxin O1 superfamily. As to expression, expressed by the venom duct.

It is found in the secreted. Its function is as follows. Delta-conotoxins bind to site 6 of voltage-gated sodium channels (Nav) and inhibit the inactivation process. The protein is Delta-conotoxin-like MVIA of Conus magus (Magical cone).